Reading from the N-terminus, the 401-residue chain is GRIP domain-containing protein C119.12 (401 aa).

The stretch at 7–296 (NETKLVENEN…TLLIGKLQHE (290 aa)) forms a coiled coil. The GRIP domain occupies 315 to 366 (NNAEKIDKQLISNLFVSFLTLPRADTKRFEILQLISSVLDWNDTQREQTGLQ).

It localises to the golgi apparatus lumen. In Schizosaccharomyces pombe (strain 972 / ATCC 24843) (Fission yeast), this protein is GRIP domain-containing protein C119.12.